Reading from the N-terminus, the 287-residue chain is Nucleotide-binding protein HEAR2885 (287 aa).

8 to 15 (GISGSGKS) lines the ATP pocket. GTP is bound at residue 57–60 (DVRS).

Belongs to the RapZ-like family.

Its function is as follows. Displays ATPase and GTPase activities. The protein is Nucleotide-binding protein HEAR2885 of Herminiimonas arsenicoxydans.